Consider the following 212-residue polypeptide: MTDITTPFPATPHKLGLYPVVDSVEWIARLLDAGVTTLQLRIKDLPDEQVEDDIAAAIALGKRYDARLFINDYWQLAIKHGAYGVHLGQEDLDTTDLAAIHRAGLRLGVSTHDDSELARAIAVKPSYIALGHIFPTQTKDMPSAPQGLVELKRHIAGLSDYPTVAIGGISIDRVAAVLDCGVGSVAVVSAITQAPDWRAATAQLLQLIEGKE.

Residues Gln39–Lys43 and Asn71 each bind 4-amino-2-methyl-5-(diphosphooxymethyl)pyrimidine. Asp72 and Asp91 together coordinate Mg(2+). Ser110 contacts 4-amino-2-methyl-5-(diphosphooxymethyl)pyrimidine. Thr136 to Thr138 is a 2-[(2R,5Z)-2-carboxy-4-methylthiazol-5(2H)-ylidene]ethyl phosphate binding site. Residue Lys139 coordinates 4-amino-2-methyl-5-(diphosphooxymethyl)pyrimidine. 2-[(2R,5Z)-2-carboxy-4-methylthiazol-5(2H)-ylidene]ethyl phosphate contacts are provided by residues Gly168 and Val188–Ser189.

It belongs to the thiamine-phosphate synthase family. Mg(2+) is required as a cofactor.

It carries out the reaction 2-[(2R,5Z)-2-carboxy-4-methylthiazol-5(2H)-ylidene]ethyl phosphate + 4-amino-2-methyl-5-(diphosphooxymethyl)pyrimidine + 2 H(+) = thiamine phosphate + CO2 + diphosphate. The catalysed reaction is 2-(2-carboxy-4-methylthiazol-5-yl)ethyl phosphate + 4-amino-2-methyl-5-(diphosphooxymethyl)pyrimidine + 2 H(+) = thiamine phosphate + CO2 + diphosphate. It catalyses the reaction 4-methyl-5-(2-phosphooxyethyl)-thiazole + 4-amino-2-methyl-5-(diphosphooxymethyl)pyrimidine + H(+) = thiamine phosphate + diphosphate. Its pathway is cofactor biosynthesis; thiamine diphosphate biosynthesis; thiamine phosphate from 4-amino-2-methyl-5-diphosphomethylpyrimidine and 4-methyl-5-(2-phosphoethyl)-thiazole: step 1/1. In terms of biological role, condenses 4-methyl-5-(beta-hydroxyethyl)thiazole monophosphate (THZ-P) and 2-methyl-4-amino-5-hydroxymethyl pyrimidine pyrophosphate (HMP-PP) to form thiamine monophosphate (TMP). The sequence is that of Thiamine-phosphate synthase from Serratia proteamaculans (strain 568).